The following is a 104-amino-acid chain: Large ribosomal subunit protein uL24 (104 aa).

The protein belongs to the universal ribosomal protein uL24 family. As to quaternary structure, part of the 50S ribosomal subunit.

One of two assembly initiator proteins, it binds directly to the 5'-end of the 23S rRNA, where it nucleates assembly of the 50S subunit. In terms of biological role, one of the proteins that surrounds the polypeptide exit tunnel on the outside of the subunit. The sequence is that of Large ribosomal subunit protein uL24 from Pseudomonas entomophila (strain L48).